We begin with the raw amino-acid sequence, 469 residues long: 3-isopropylmalate dehydratase large subunit 2 (469 aa).

Positions 347, 408, and 411 each coordinate [4Fe-4S] cluster.

It belongs to the aconitase/IPM isomerase family. LeuC type 1 subfamily. As to quaternary structure, heterodimer of LeuC and LeuD. Requires [4Fe-4S] cluster as cofactor.

It carries out the reaction (2R,3S)-3-isopropylmalate = (2S)-2-isopropylmalate. Its pathway is amino-acid biosynthesis; L-leucine biosynthesis; L-leucine from 3-methyl-2-oxobutanoate: step 2/4. Catalyzes the isomerization between 2-isopropylmalate and 3-isopropylmalate, via the formation of 2-isopropylmaleate. The protein is 3-isopropylmalate dehydratase large subunit 2 of Mannheimia succiniciproducens (strain KCTC 0769BP / MBEL55E).